Reading from the N-terminus, the 129-residue chain is Glycine cleavage system H protein (129 aa).

A Lipoyl-binding domain is found at 24–106; sequence HAVVGITDFA…YDGGWLFKLA (83 aa). Lys65 carries the post-translational modification N6-lipoyllysine.

The protein belongs to the GcvH family. The glycine cleavage system is composed of four proteins: P, T, L and H. It depends on (R)-lipoate as a cofactor.

In terms of biological role, the glycine cleavage system catalyzes the degradation of glycine. The H protein shuttles the methylamine group of glycine from the P protein to the T protein. The sequence is that of Glycine cleavage system H protein from Hydrogenovibrio crunogenus (strain DSM 25203 / XCL-2) (Thiomicrospira crunogena).